A 129-amino-acid chain; its full sequence is Glycine cleavage system H protein (129 aa).

Residues 24-106 form the Lipoyl-binding domain; sequence TYTVGITEHA…YTDGWIFKIK (83 aa). At Lys-65 the chain carries N6-lipoyllysine.

It belongs to the GcvH family. As to quaternary structure, the glycine cleavage system is composed of four proteins: P, T, L and H. It depends on (R)-lipoate as a cofactor.

Its function is as follows. The glycine cleavage system catalyzes the degradation of glycine. The H protein shuttles the methylamine group of glycine from the P protein to the T protein. In Klebsiella pneumoniae subsp. pneumoniae (strain ATCC 700721 / MGH 78578), this protein is Glycine cleavage system H protein.